The sequence spans 58 residues: MSSVIVKENETLDSALRRFKRNCAKAGIQQEIRKREHYEKPSVKRKKKSEAARKRKYN.

The span at 31–42 (EIRKREHYEKPS) shows a compositional bias: basic and acidic residues. Positions 31-58 (EIRKREHYEKPSVKRKKKSEAARKRKYN) are disordered. The segment covering 43-58 (VKRKKKSEAARKRKYN) has biased composition (basic residues).

The protein belongs to the bacterial ribosomal protein bS21 family.

The polypeptide is Small ribosomal subunit protein bS21 (Agathobacter rectalis (strain ATCC 33656 / DSM 3377 / JCM 17463 / KCTC 5835 / VPI 0990) (Eubacterium rectale)).